A 209-amino-acid chain; its full sequence is Urease accessory protein UreG (209 aa).

18-25 (GPVGSGKT) contributes to the GTP binding site.

The protein belongs to the SIMIBI class G3E GTPase family. UreG subfamily. As to quaternary structure, homodimer. UreD, UreF and UreG form a complex that acts as a GTP-hydrolysis-dependent molecular chaperone, activating the urease apoprotein by helping to assemble the nickel containing metallocenter of UreC. The UreE protein probably delivers the nickel.

It is found in the cytoplasm. Functionally, facilitates the functional incorporation of the urease nickel metallocenter. This process requires GTP hydrolysis, probably effectuated by UreG. The sequence is that of Urease accessory protein UreG from Cupriavidus necator (strain ATCC 17699 / DSM 428 / KCTC 22496 / NCIMB 10442 / H16 / Stanier 337) (Ralstonia eutropha).